The chain runs to 38 residues: Large ribosomal subunit protein bL36 (38 aa).

Belongs to the bacterial ribosomal protein bL36 family.

The polypeptide is Large ribosomal subunit protein bL36 (Aster yellows witches'-broom phytoplasma (strain AYWB)).